The chain runs to 187 residues: NADH-quinone oxidoreductase subunit C 2 (187 aa).

The disordered stretch occupies residues 153–187; the sequence is YKDKLNPFGAEGPPPTQPDLATRDIPQGRPSTPES.

This sequence belongs to the complex I 30 kDa subunit family. In terms of assembly, NDH-1 is composed of 14 different subunits. Subunits NuoB, C, D, E, F, and G constitute the peripheral sector of the complex.

It localises to the cell inner membrane. It catalyses the reaction a quinone + NADH + 5 H(+)(in) = a quinol + NAD(+) + 4 H(+)(out). NDH-1 shuttles electrons from NADH, via FMN and iron-sulfur (Fe-S) centers, to quinones in the respiratory chain. The immediate electron acceptor for the enzyme in this species is believed to be ubiquinone. Couples the redox reaction to proton translocation (for every two electrons transferred, four hydrogen ions are translocated across the cytoplasmic membrane), and thus conserves the redox energy in a proton gradient. The chain is NADH-quinone oxidoreductase subunit C 2 from Rhizobium etli (strain CIAT 652).